Here is a 176-residue protein sequence, read N- to C-terminus: Large ribosomal subunit protein bL17m (176 aa).

A mitochondrion-targeting transit peptide spans 1–8; it reads MRLSLAAA.

The protein belongs to the bacterial ribosomal protein bL17 family. In terms of assembly, component of the mitochondrial ribosome large subunit (39S) which comprises a 16S rRNA and about 50 distinct proteins.

Its subcellular location is the mitochondrion. The protein is Large ribosomal subunit protein bL17m (Mrpl17) of Rattus norvegicus (Rat).